Reading from the N-terminus, the 152-residue chain is UPF0266 membrane protein YobD (152 aa).

Helical transmembrane passes span 6–26 (LVLI…QFIM), 45–65 (VDSV…VTSH), and 67–87 (AQMT…IFWI).

It belongs to the UPF0266 family.

It is found in the cell inner membrane. The chain is UPF0266 membrane protein YobD from Salmonella paratyphi A (strain ATCC 9150 / SARB42).